The following is a 430-amino-acid chain: Serine--tRNA ligase (430 aa).

Position 237 to 239 (237 to 239 (TAE)) interacts with L-serine. An ATP-binding site is contributed by 268-270 (RSE). Glu-291 contacts L-serine. An ATP-binding site is contributed by 355 to 358 (EISS). L-serine is bound at residue Ser-391.

The protein belongs to the class-II aminoacyl-tRNA synthetase family. Type-1 seryl-tRNA synthetase subfamily. In terms of assembly, homodimer. The tRNA molecule binds across the dimer.

It localises to the cytoplasm. It carries out the reaction tRNA(Ser) + L-serine + ATP = L-seryl-tRNA(Ser) + AMP + diphosphate + H(+). The enzyme catalyses tRNA(Sec) + L-serine + ATP = L-seryl-tRNA(Sec) + AMP + diphosphate + H(+). It participates in aminoacyl-tRNA biosynthesis; selenocysteinyl-tRNA(Sec) biosynthesis; L-seryl-tRNA(Sec) from L-serine and tRNA(Sec): step 1/1. Catalyzes the attachment of serine to tRNA(Ser). Is also able to aminoacylate tRNA(Sec) with serine, to form the misacylated tRNA L-seryl-tRNA(Sec), which will be further converted into selenocysteinyl-tRNA(Sec). This is Serine--tRNA ligase from Salmonella enteritidis PT4 (strain P125109).